Reading from the N-terminus, the 233-residue chain is MKEDPYLDVKKRLAREAAALVTSGMLVGLGSGSTSREFIKAIAERLAKENLDICAVASSQESYSLASSLGIPLIDDENFTSVDLVVDGADEIDPQLRMIKGGGGAIFREKILLQSSQRRLILADESKSVKVLGKFGLPVEISPYGRSSIIAALEAIGYLGNLRKNSRGGFFITNNGNYIYDIHTPNIYPHPEEDLLKLLQIHGIIEVGFVIANVEVWFGYTNGQICKENTGIV.

Substrate is bound by residues 31 to 34 (SGST), 87 to 90 (DGAD), and 100 to 103 (KGGG). Glu109 serves as the catalytic Proton acceptor. Substrate is bound at residue Lys127.

It belongs to the ribose 5-phosphate isomerase family. In terms of assembly, homodimer.

The enzyme catalyses aldehydo-D-ribose 5-phosphate = D-ribulose 5-phosphate. The protein operates within carbohydrate degradation; pentose phosphate pathway; D-ribose 5-phosphate from D-ribulose 5-phosphate (non-oxidative stage): step 1/1. Its function is as follows. Catalyzes the reversible conversion of ribose-5-phosphate to ribulose 5-phosphate. The sequence is that of Ribose-5-phosphate isomerase A from Chlamydia felis (strain Fe/C-56) (Chlamydophila felis).